A 332-amino-acid chain; its full sequence is Autoinducer 2 import system permease protein LsrD (332 aa).

A run of 10 helical transmembrane segments spans residues 7–27, 45–65, 70–90, 91–111, 118–138, 162–182, 216–236, 240–260, 261–281, and 288–308; these read YSWE…FGLI, ICIG…GMDI, TIGL…PLPL, AIII…GLII, LVIT…LSGM, FLGI…FWLL, VYAM…SYFG, SDLG…GGAN, IYGG…VGFL, and AGVP…VVVV.

It belongs to the binding-protein-dependent transport system permease family. AraH/RbsC subfamily. The complex is composed of two ATP-binding proteins (LsrA), two transmembrane proteins (LsrC and LsrD) and a solute-binding protein (LsrB).

It is found in the cell inner membrane. Part of the ABC transporter complex LsrABCD involved in autoinducer 2 (AI-2) import. Probably responsible for the translocation of the substrate across the membrane. The sequence is that of Autoinducer 2 import system permease protein LsrD (lsrD) from Salmonella paratyphi B (strain ATCC BAA-1250 / SPB7).